The sequence spans 465 residues: Fujikurins efflux protein FFUJ_12242 (465 aa).

The disordered stretch occupies residues 1–66; it reads MATNVGGAVD…AAKAHDEGPP (66 aa). A compositionally biased stretch (basic and acidic residues) spans 11–28; sequence NSRRSISDNRHDPEKPAE. Helical transmembrane passes span 70 to 90, 115 to 135, 142 to 162, 175 to 195, 200 to 220, 231 to 251, and 274 to 294; these read TAAWMVVLGAWCCSFCSPGWI, WIPSLEIFFLFGLGPIVGIIF, PLIIGGTIFHVFGLMMASLAK, SAIGVACLYSPALACISTWFL, AAMGIMATGSSVGGVIFPIMI, WALRTAAFLILGLQVIACLTV, and PAFALLLAGIFILTYGMYIPI. Asn310 carries N-linked (GlcNAc...) asparagine glycosylation. 5 helical membrane passes run 314–334, 342–362, 368–388, 404–424, and 430–450; these read YLVAIMNAASLFGRLGAGYGA, MFIIACGVTGISNLAVWIPAT, IGYAIMFGFASGAFVSLVGAL, IVFLVISIPALTMAPIGGAIL, and GWVSLKVFAGVMCLVGSAIIL.

The protein belongs to the major facilitator superfamily. Monocarboxylate porter (TC 2.A.1.13) family.

It localises to the cell membrane. In terms of biological role, efflux pump that may be involved in the secretion of fujikurins. This is Fujikurins efflux protein FFUJ_12242 from Gibberella fujikuroi (strain CBS 195.34 / IMI 58289 / NRRL A-6831) (Bakanae and foot rot disease fungus).